We begin with the raw amino-acid sequence, 226 residues long: MLTWLQRNTLDFPPLEKAMREPNGLLAAGGDLSADRLIQAYRHGCFPWFSEGQPILWWSPDPRTVLFPDELHVSRSLGKLLRKQHYQVTFDRDFAAVISACAAPRAYADGTWISEAMQRAYLQLHQRGYAHSVEVWDQGVLVGGLYGLAMGQLFFGESMFSRADNASKFGFATLVERLKAWGFVLIDCQMPTEHLHSLGARSISRPEFANYLKHHLDLPSRAIWVS.

It belongs to the L/F-transferase family.

It is found in the cytoplasm. It catalyses the reaction N-terminal L-lysyl-[protein] + L-leucyl-tRNA(Leu) = N-terminal L-leucyl-L-lysyl-[protein] + tRNA(Leu) + H(+). It carries out the reaction N-terminal L-arginyl-[protein] + L-leucyl-tRNA(Leu) = N-terminal L-leucyl-L-arginyl-[protein] + tRNA(Leu) + H(+). The enzyme catalyses L-phenylalanyl-tRNA(Phe) + an N-terminal L-alpha-aminoacyl-[protein] = an N-terminal L-phenylalanyl-L-alpha-aminoacyl-[protein] + tRNA(Phe). Functions in the N-end rule pathway of protein degradation where it conjugates Leu, Phe and, less efficiently, Met from aminoacyl-tRNAs to the N-termini of proteins containing an N-terminal arginine or lysine. This is Leucyl/phenylalanyl-tRNA--protein transferase from Pseudomonas fluorescens (strain ATCC BAA-477 / NRRL B-23932 / Pf-5).